Here is a 241-residue protein sequence, read N- to C-terminus: 6-hydroxymethyl-7,8-dihydropterin pyrophosphokinase (241 aa).

The protein belongs to the archaeal 6-HMPDK family. Mg(2+) serves as cofactor.

It catalyses the reaction 6-hydroxymethyl-7,8-dihydropterin + ATP = (7,8-dihydropterin-6-yl)methyl diphosphate + AMP + H(+). The protein operates within cofactor biosynthesis; 5,6,7,8-tetrahydromethanopterin biosynthesis. Functionally, catalyzes the transfer of diphosphate from ATP to 6-hydroxymethyl-7,8-dihydropterin (6-HMD), leading to 6-hydroxymethyl-7,8-dihydropterin diphosphate (6-HMDP). This is 6-hydroxymethyl-7,8-dihydropterin pyrophosphokinase from Methanocaldococcus jannaschii (strain ATCC 43067 / DSM 2661 / JAL-1 / JCM 10045 / NBRC 100440) (Methanococcus jannaschii).